Here is a 202-residue protein sequence, read N- to C-terminus: Recombination protein RecR (202 aa).

Residues 57–72 (CGVCRTFTEQPCCDIC) form a C4-type zinc finger. A Toprim domain is found at 81 to 176 (GQICVVESPS…STTKIAHGVP (96 aa)).

This sequence belongs to the RecR family.

May play a role in DNA repair. It seems to be involved in an RecBC-independent recombinational process of DNA repair. It may act with RecF and RecO. This is Recombination protein RecR from Hamiltonella defensa subsp. Acyrthosiphon pisum (strain 5AT).